The chain runs to 793 residues: MMAALYPSTDLSGVSSSSLPSSPSSSSPNEVMALKDVREVKEENTLNEKLFLLACDKGDYYMVKKILEENSSGDLNINCVDVLGRNAVTITIENESLDILQLLLDYGCQSADALLVAIDSEVVGAVDILLNHRPKRSSRPTIVKLMERIQNPEYSTTMDVAPVILAAHRNNYEILTMLLKQDVSLPKPHAVGCECTLCSAKNKKDSLRHSRFRLDIYRCLASPALIMLTEEDPILRAFELSADLKELSLVEVEFRNDYEELARQCKMFAKDLLAQARNSRELEVILNHTSSDEPLDKRGLLEERMNLSRLKLAIKYNQKEFVSQSNCQQFLNTVWFGQMSGYRRKPTCKKIMTVLTVGIFWPVLSLCYLIAPKSQFGRIIHTPFMKFIIHGASYFTFLLLLNLYSLVYNEDKKNTMGPALERIDYLLILWIIGMIWSDIKRLWYEGLEDFLEESRNQLSFVMNSLYLATFALKVVAHNKFHDFADRKDWDAFHPTLVAEGLFAFANVLSYLRLFFMYTTSSILGPLQISMGQMLQDFGKFLGMFLLVLFSFTIGLTQLYDKGYTSKEQKDCVGIFCEQQSNDTFHSFIGTCFALFWYIFSLAHVAIFVTRFSYGEELQSFVGAVIVGTYNVVVVIVLTKLLVAMLHKSFQLIANHEDKEWKFARAKLWLSYFDDKCTLPPPFNIIPSPKTICYMISSLSKWICSHTSKGKVKRQNSLKEWRNLKQKRDENYQKVMCCLVHRYLTSMRQKMQSTDQATVENLNELRQDLSKFRNEIRDLLGFRTSKYAMFYPRN.

The tract at residues 1–30 (MMAALYPSTDLSGVSSSSLPSSPSSSSPNE) is disordered. Over 1–345 (MMAALYPSTD…FGQMSGYRRK (345 aa)) the chain is Cytoplasmic. Over residues 15–28 (SSSSLPSSPSSSSP) the composition is skewed to low complexity. 4 ANK repeats span residues 46–75 (LNEK…SGDL), 83–109 (LGRN…YGCQ), 111–156 (ADAL…EYST), and 158–180 (MDVA…MLLK). The Zn(2+) site is built by His189, Cys193, Cys195, and Cys198. An intramembrane region (discontinuously helical) is located at residues 346–379 (PTCKKIMTVLTVGIFWPVLSLCYLIAPKSQFGRI). Residues 380-386 (IHTPFMK) lie on the Cytoplasmic side of the membrane. The chain crosses the membrane as a helical span at residues 387–404 (FIIHGASYFTFLLLLNLY). Residues 405 to 422 (SLVYNEDKKNTMGPALER) lie on the Extracellular side of the membrane. A helical transmembrane segment spans residues 423-439 (IDYLLILWIIGMIWSDI). At 440–455 (KRLWYEGLEDFLEESR) the chain is on the cytoplasmic side. Residues 456 to 475 (NQLSFVMNSLYLATFALKVV) form a helical membrane-spanning segment. Residues 476-496 (AHNKFHDFADRKDWDAFHPTL) lie on the Extracellular side of the membrane. A helical membrane pass occupies residues 497-517 (VAEGLFAFANVLSYLRLFFMY). At 518–536 (TTSSILGPLQISMGQMLQD) the chain is on the cytoplasmic side. The helical transmembrane segment at 537-558 (FGKFLGMFLLVLFSFTIGLTQL) threads the bilayer. Residues 559-623 (YDKGYTSKEQ…GEELQSFVGA (65 aa)) are Extracellular-facing. Cys571 and Cys576 are disulfide-bonded. Residues 624–644 (VIVGTYNVVVVIVLTKLLVAM) form a helical membrane-spanning segment. Topologically, residues 645–793 (LHKSFQLIAN…SKYAMFYPRN (149 aa)) are cytoplasmic.

Belongs to the transient receptor (TC 1.A.4) family. STrpC subfamily. TRPC1 sub-subfamily. In terms of assembly, heterotetramer with TRPC4 and/or TRPC5. Forms a heteromeric ion channel with TRPC4, with a 1:3 TRPC1:TRPC4 stoichiometry. Unlike other TRP channel proteins, does not form a homomeric channel. Interacts with TRPC4AP. Interacts with ITPR3. Interacts with MX1 and RNF24. Interacts with FKBP4. Interacts with PLSCR1. Interacts with PKD2L2. Forms a heterotetramer with PKD2 with a 2:2 stoichiometry; has distinct channel properties separate from PKD2 or TRPC1 homomers alone. In terms of processing, activation of PRKCA induces phosphorylation of TRPC1 and subsequent Ca2+ entry into cells.

Its subcellular location is the cell membrane. It catalyses the reaction Ca(2+)(in) = Ca(2+)(out). The enzyme catalyses Na(+)(in) = Na(+)(out). It carries out the reaction Li(+)(in) = Li(+)(out). The catalysed reaction is Cs(+)(in) = Cs(+)(out). With respect to regulation, may be operated by a phosphatidylinositol second messenger system activated by receptor tyrosine kinases or G-protein coupled receptors. Also activated by intracellular calcium store depletion. Functionally, forms a receptor-activated non-selective calcium permeant cation channel. Forms a heteromeric ion channel with TRPC4 or TRPC5 that has reduced calcium permeability compared to the homomeric TRPC4 or TRPC5 channel. Also permeable to monovalent ions including sodium, lithium and cesium ions. The chain is Short transient receptor potential channel 1 (Trpc1) from Mus musculus (Mouse).